The sequence spans 287 residues: Probable aquaporin PIP1-4 (287 aa).

Met-1 is modified (N-acetylmethionine). Residues 1 to 36 (MEGKEEDVRVGANKFPERQPIGTSAQSTDKDYKEPP) form a disordered region. The Cytoplasmic segment spans residues 1 to 55 (MEGKEEDVRVGANKFPERQPIGTSAQSTDKDYKEPPPAPLFEPGELSSWSFYRAG). The chain crosses the membrane as a helical span at residues 56 to 76 (IAEFIATFLFLYITVLTVMGV). At 77 to 92 (KRAPNMCASVGIQGIA) the chain is on the extracellular side. The chain crosses the membrane as a helical span at residues 93 to 113 (WAFGGMIFALVYCTAGISGGH). Residues 114-133 (INPAVTFGLFLARKLSLTRA) lie on the Cytoplasmic side of the membrane. The NPA 1 motif lies at 115–117 (NPA). A helical transmembrane segment spans residues 134-154 (VFYMIMQCLGAICGAGVVKGF). The Extracellular portion of the chain corresponds to 155 to 175 (QPTPYQTLGGGANTVAHGYTK). The helical transmembrane segment at 176-196 (GSGLGAEIIGTFVLVYTVFSA) threads the bilayer. Topologically, residues 197 to 209 (TDAKRSARDSHVP) are cytoplasmic. A helical membrane pass occupies residues 210-230 (ILAPLPIGFAVFLVHLATIPI). The Extracellular portion of the chain corresponds to 231–257 (TGTGINPARSLGAAIIYNKDHSWDDHW). Residues 236-238 (NPA) carry the NPA 2 motif. Residues 258-278 (IFWVGPFIGAALAALYHQIVI) form a helical membrane-spanning segment. Residues 279-287 (RAIPFKSKS) lie on the Cytoplasmic side of the membrane. At Ser-285 the chain carries Phosphoserine.

This sequence belongs to the MIP/aquaporin (TC 1.A.8) family. PIP (TC 1.A.8.11) subfamily. Predominantly expressed in roots and green siliques. Also expressed above ground and in flower buds.

It is found in the cell membrane. Aquaporins facilitate the transport of water and small neutral solutes across cell membranes. This Arabidopsis thaliana (Mouse-ear cress) protein is Probable aquaporin PIP1-4 (PIP1.4).